Here is a 978-residue protein sequence, read N- to C-terminus: Probable serine/threonine-protein kinase PLK (978 aa).

The segment covering Ile19–Lys36 has biased composition (low complexity). 2 disordered regions span residues Ile19–His66 and Gln121–Gln143. Over residues Ser37–Pro53 the composition is skewed to polar residues. Low complexity predominate over residues Ser54–Ser64. Residues Tyr163 to Phe416 form the Protein kinase domain. ATP contacts are provided by residues Leu169–Cys177 and Lys192. Asp286 functions as the Proton acceptor in the catalytic mechanism. Disordered regions lie at residues Gly463–Leu554 and Glu601–Thr638. Low complexity-rich tracts occupy residues His473–Gln492 and Ile500–Asn549. Coiled-coil stretches lie at residues Lys497–Ser555 and Ile592–Asn630. The region spanning Tyr696–Asn780 is the POLO box 1 domain. Residues Asn798–Ser819 form a disordered region. The POLO box 2 domain maps to Tyr826 to Tyr904. The tract at residues Pro908–Gln978 is disordered. A compositionally biased stretch (low complexity) spans Gln913–Gln978.

The protein belongs to the protein kinase superfamily. Ser/Thr protein kinase family. CDC5/Polo subfamily.

The enzyme catalyses L-seryl-[protein] + ATP = O-phospho-L-seryl-[protein] + ADP + H(+). It catalyses the reaction L-threonyl-[protein] + ATP = O-phospho-L-threonyl-[protein] + ADP + H(+). The chain is Probable serine/threonine-protein kinase PLK (PLK) from Dictyostelium discoideum (Social amoeba).